The chain runs to 559 residues: Potassium-transporting ATPase potassium-binding subunit (559 aa).

12 helical membrane-spanning segments follow: residues 7–27 (LLIA…GSGL), 63–83 (LLAL…LLFW), 132–152 (GLTV…FALI), 170–190 (LVRI…LFFI), 253–273 (MVQM…FGEA), 283–303 (LLWA…WAEV), 327–347 (FGVL…CGAV), 356–376 (ALGG…FGGV), 379–399 (GLYG…LMIG), 416–436 (MTAL…ALAM), 484–504 (LLAF…MAIA), and 524–544 (GALF…LTFI).

This sequence belongs to the KdpA family. The system is composed of three essential subunits: KdpA, KdpB and KdpC.

It is found in the cell inner membrane. Functionally, part of the high-affinity ATP-driven potassium transport (or Kdp) system, which catalyzes the hydrolysis of ATP coupled with the electrogenic transport of potassium into the cytoplasm. This subunit binds the periplasmic potassium ions and delivers the ions to the membrane domain of KdpB through an intramembrane tunnel. The chain is Potassium-transporting ATPase potassium-binding subunit from Salmonella arizonae (strain ATCC BAA-731 / CDC346-86 / RSK2980).